The following is a 1215-amino-acid chain: MVDVNRFKSMQITLASPSKVRSWSYGEVKKPETINYRTLKPERDGLFDEVIFGPTKDWECSCGKYKRIRYKGITCDRCGVEVTRAKVRRERMGHIELKAPISHIWYFKGIPSRMGLTLDMSPRALEEVIYFAAYVVIDPKDTPLEHKSIMTEREYRERLREYGYGSFVAKMGAEAIQDLLKQVDLPKEIAALKEELKTASGQKRIKAVRRLDVLDAFYKSGNKPEWMILNILPVIPPDLRPMVQLDGGRFAASDLNELYRRVINRNNRLARLLELNAPGIIVQNEKRMLQEAVDALIDNGRRGRPITGPGSRPLKSLSHMLKGKQGRFRQNLLGKRVDFSGRSVIAVGPTLKMYQCGVPREMAIELFKPFVMREIVARDIAGNVKAAKRLIERGDDRIWDILEEVIKEHPVLLNRAPTLHRLGIQAFEPVLIDGKALRLHPLVCEAYNADFDGDQMAIHVPLSEEAQAEARILMLAAEHILNPKDGKPVVTPSQDMVLGNYYLTMEDAGREGEGMVFKDADEAVMAYRNGYVHLHTRVGIATDSLDKPWKDNQKHKVMMTTVGKILFNAIMPEGLPYLQEPNNANLTEGTPDKYFLEPGSDIKAAIAELPINPPFKKKNLGNIIAEIFKRFRTTETSALLDRLKDLGYYHSTLAGLTVGIADIPVIDNKAEIIEESHERVEQIKKQFRRGMITDDERYAAVTDEWRSAKEKLEKRLVEKQDPKNPIVMMMDSGARGNISNFSQLAGMRGLMSAPNGRIMELPILSNFREGLSVLEMFFSTHGARKGMTDTALKTADSGYLTRRLVDVAQDVIIREDDCGTDRGLDIRSITDGKEMIEPLEERLQGRYTKKTVKHPETGAVIIGPNQLITEDIAREIVNAGVEQVTIRSVFTCNTRHGVCRHCYGINLATGDAVEVGEAVGTIAAQSIGEPGTQLTMRTFHTGGVASNSDITQGLPRVQEIFEARNPKGEAVITEVKGEVIAIEEDASTRTKKVFVKGKTGEGEYVVPFTARMKVEVGDQVARGAALTEGSIQPKRLLEVRDVLAVETYLLSEVQKVYRSQGVEIGDKHIEVMVRQMLRKVRVMDPGDTDLLMGTLMDITDFTDANAEVVIAGGIPATARPVLMGITKASLETNSFLSAASFQETTRVLTDAAIRGKRDNLLGLKENVIIGKIIPAGTGMARYRNLEPQAINEVEIIEDTVAEELAAEAELEAVTE.

Residues cysteine 60, cysteine 62, cysteine 75, and cysteine 78 each coordinate Zn(2+). 3 residues coordinate Mg(2+): aspartate 450, aspartate 452, and aspartate 454. Zn(2+) is bound by residues cysteine 818, cysteine 892, cysteine 899, and cysteine 902.

Belongs to the RNA polymerase beta' chain family. As to quaternary structure, the RNAP catalytic core consists of 2 alpha, 1 beta, 1 beta' and 1 omega subunit. When a sigma factor is associated with the core the holoenzyme is formed, which can initiate transcription. The cofactor is Mg(2+). Zn(2+) serves as cofactor.

The catalysed reaction is RNA(n) + a ribonucleoside 5'-triphosphate = RNA(n+1) + diphosphate. DNA-dependent RNA polymerase catalyzes the transcription of DNA into RNA using the four ribonucleoside triphosphates as substrates. This is DNA-directed RNA polymerase subunit beta' from Streptococcus suis (strain 98HAH33).